The sequence spans 1342 residues: DNA-directed RNA polymerase subunit beta (1342 aa).

This sequence belongs to the RNA polymerase beta chain family. The RNAP catalytic core consists of 2 alpha, 1 beta, 1 beta' and 1 omega subunit. When a sigma factor is associated with the core the holoenzyme is formed, which can initiate transcription.

It catalyses the reaction RNA(n) + a ribonucleoside 5'-triphosphate = RNA(n+1) + diphosphate. DNA-dependent RNA polymerase catalyzes the transcription of DNA into RNA using the four ribonucleoside triphosphates as substrates. This Edwardsiella ictaluri (strain 93-146) protein is DNA-directed RNA polymerase subunit beta.